The sequence spans 414 residues: Eukaryotic initiation factor 4A-3 (414 aa).

The Q motif motif lies at 41–69; the sequence is ESFDDMGLQENLLRGIYAYGFEKPSAIQQ. The Helicase ATP-binding domain occupies 72-242; the sequence is IVPFCKGLDV…RKFMNKPVRI (171 aa). 85–92 serves as a coordination point for ATP; the sequence is AQSGTGKT. Positions 190–193 match the DEAD box motif; that stretch reads DEAD. The 162-residue stretch at 253-414 folds into the Helicase C-terminal domain; the sequence is GIKQFYVNVE…ELPANVADLL (162 aa).

Belongs to the DEAD box helicase family. eIF4A subfamily. EIF4F is a multi-subunit complex, the composition of which varies with external and internal environmental conditions. It is composed of at least EIF4A, EIF4E and EIF4G. Interacts with DRM2 (via UBA domains).

Its subcellular location is the cytoplasm. It localises to the nucleus. It carries out the reaction ATP + H2O = ADP + phosphate + H(+). ATP-dependent RNA helicase which is a subunit of the eIF4F complex involved in cap recognition and is required for mRNA binding to ribosome. In the current model of translation initiation, eIF4A unwinds RNA secondary structures in the 5'-UTR of mRNAs which is necessary to allow efficient binding of the small ribosomal subunit, and subsequent scanning for the initiator codon. In Oryza sativa subsp. japonica (Rice), this protein is Eukaryotic initiation factor 4A-3.